The chain runs to 334 residues: Forkhead box protein N2 (334 aa).

Disordered stretches follow at residues 1–52 (MGPV…SGTT) and 83–108 (SPLY…ASSK). Positions 108–204 (KPPYSFSLLI…QALKKQPFSS (97 aa)) form a DNA-binding region, fork-head.

It localises to the nucleus. In Xenopus tropicalis (Western clawed frog), this protein is Forkhead box protein N2.